The chain runs to 129 residues: Large ribosomal subunit protein bL12 (129 aa).

It belongs to the bacterial ribosomal protein bL12 family. As to quaternary structure, homodimer. Part of the ribosomal stalk of the 50S ribosomal subunit. Forms a multimeric L10(L12)X complex, where L10 forms an elongated spine to which 2 to 4 L12 dimers bind in a sequential fashion. Binds GTP-bound translation factors.

Forms part of the ribosomal stalk which helps the ribosome interact with GTP-bound translation factors. Is thus essential for accurate translation. The sequence is that of Large ribosomal subunit protein bL12 from Protochlamydia amoebophila (strain UWE25).